Consider the following 186-residue polypeptide: Coiled-coil domain-containing protein ORF13 (186 aa).

2 coiled-coil regions span residues 2 to 30 (GIKE…DFIK) and 63 to 85 (LREK…QRDK).

This chain is Coiled-coil domain-containing protein ORF13, found in Helicobacter pylori (strain 35A).